The following is a 465-amino-acid chain: Sensor histidine kinase ZraS (465 aa).

Residues 1–14 lie on the Cytoplasmic side of the membrane; the sequence is MSFIRLHKDAAATW. A helical transmembrane segment spans residues 15–35; sequence LSRLLPAAIFILVGLFSIMVI. Residues 36–202 lie on the Periplasmic side of the membrane; it reads RDYGRESAAA…AATQAREWRN (167 aa). A helical transmembrane segment spans residues 203-223; it reads TLIVLSALAAVLLATLLAFFW. At 224–465 the chain is on the cytoplasmic side; sequence HQRYQRSHRE…WLPVIARQQD (242 aa). Residues 253 to 461 enclose the Histidine kinase domain; sequence GVAHEIRNPL…VFTIWLPVIA (209 aa). H256 is subject to Phosphohistidine; by autocatalysis.

Post-translationally, autophosphorylated.

Its subcellular location is the cell inner membrane. It carries out the reaction ATP + protein L-histidine = ADP + protein N-phospho-L-histidine.. Activity of the ZraS/ZraR two-component system is repressed by the zinc-bound form of ZraP, which probably interacts with the periplasmic region of ZraS. Its function is as follows. Part of the Zra signaling pathway, an envelope stress response (ESR) system composed of the periplasmic accessory protein ZraP, the histidine kinase ZraS and the transcriptional regulator ZraR. The ZraPSR system contributes to antibiotic resistance and is important for membrane integrity in the presence of membrane-targeting biocides. ZraS is a member of the two-component regulatory system ZraS/ZraR. Functions as a membrane-associated sensor kinase that phosphorylates ZraR in response to high concentrations of Zn(2+) or Pb(2+) in the medium. This is Sensor histidine kinase ZraS from Salmonella typhimurium (strain LT2 / SGSC1412 / ATCC 700720).